Consider the following 423-residue polypeptide: Histidine--tRNA ligase (423 aa).

It belongs to the class-II aminoacyl-tRNA synthetase family. Homodimer.

The protein resides in the cytoplasm. It catalyses the reaction tRNA(His) + L-histidine + ATP = L-histidyl-tRNA(His) + AMP + diphosphate + H(+). This chain is Histidine--tRNA ligase, found in Prochlorococcus marinus (strain NATL1A).